A 195-amino-acid polypeptide reads, in one-letter code: Cytochrome c oxidase assembly protein CtaG (195 aa).

Residues 1–9 are Cytoplasmic-facing; that stretch reads MALNGPQKT. The helical; Signal-anchor for type II membrane protein transmembrane segment at 10 to 30 threads the bilayer; the sequence is VVQLVGVVVLMGGLAWASVPF. Topologically, residues 31 to 195 are periplasmic; the sequence is YDWFCRVTGF…DTSGAETELN (165 aa).

This sequence belongs to the COX11/CtaG family.

It localises to the cell inner membrane. Functionally, exerts its effect at some terminal stage of cytochrome c oxidase synthesis, probably by being involved in the insertion of the copper B into subunit I. The protein is Cytochrome c oxidase assembly protein CtaG of Ruegeria sp. (strain TM1040) (Silicibacter sp.).